We begin with the raw amino-acid sequence, 1026 residues long: Multidrug resistance protein MdtC (1026 aa).

The Cytoplasmic portion of the chain corresponds to 1–6 (MRFFAL). Residues 7–29 (FIYRPVATILIAAAITLCGILGF) traverse the membrane as a helical segment. Residues 30-335 (RLLPVAPLPQ…TIRASLQEVE (306 aa)) lie on the Periplasmic side of the membrane. A helical membrane pass occupies residues 336–353 (ETLAISVALVILVVFLFL). Topologically, residues 354-359 (RSGRAT) are cytoplasmic. A helical membrane pass occupies residues 360–379 (LIPAVAVPVSLIGTFAAMYL). Residues 380–388 (CGFSLNNLS) are Periplasmic-facing. A helical membrane pass occupies residues 389-411 (LMALTIATGFVVDDAIVVLENIA). Over 412–430 (RHLEAGMKPLQAALQGTRE) the chain is Cytoplasmic. The chain crosses the membrane as a helical span at residues 431-453 (VGFTVISMSLSLVAVFLPLLLMG). The Periplasmic portion of the chain corresponds to 454–467 (GLPGRLLREFAVTL). A helical membrane pass occupies residues 468-490 (SVAIGISLVVSLTLTPMMCGWML). The Cytoplasmic segment spans residues 491-852 (KSSKPRTQPR…QVFQQTMNSQ (362 aa)). The chain crosses the membrane as a helical span at residues 853 to 875 (LILIVAAIATVYIVLGILYESYV). Over 876–894 (HPLTILSTLPSAGVGALLA) the chain is Periplasmic. The chain crosses the membrane as a helical span at residues 895-917 (LELFNAPFSLIALIGIMLLIGIV). Residues 918–947 (KKNAIMMVDFALEAQRSGGLTPEQAIFQAC) are Cytoplasmic-facing. A helical membrane pass occupies residues 948 to 970 (LLRFRPIMMTTLAALFGALPLVL). Residues 971–984 (SGGDGSELRQPLGI) are Periplasmic-facing. Residues 985–1007 (TIVGGLVMSQLLTLYTTPVVYLF) form a helical membrane-spanning segment. Over 1008-1026 (FDRLRLRFSRKNSKPVVEI) the chain is Cytoplasmic.

The protein belongs to the resistance-nodulation-cell division (RND) (TC 2.A.6) family. MdtC subfamily. As to quaternary structure, part of a tripartite efflux system composed of MdtA, MdtB and MdtC. MdtC forms a heteromultimer with MdtB.

The protein resides in the cell inner membrane. The protein is Multidrug resistance protein MdtC of Salmonella typhimurium (strain LT2 / SGSC1412 / ATCC 700720).